The sequence spans 382 residues: Alkanesulfonate monooxygenase (382 aa).

Belongs to the SsuD family.

It catalyses the reaction an alkanesulfonate + FMNH2 + O2 = an aldehyde + FMN + sulfite + H2O + 2 H(+). Catalyzes the desulfonation of aliphatic sulfonates. This is Alkanesulfonate monooxygenase from Pseudomonas putida (strain ATCC 47054 / DSM 6125 / CFBP 8728 / NCIMB 11950 / KT2440).